Consider the following 632-residue polypeptide: 1-deoxy-D-xylulose-5-phosphate synthase (632 aa).

Residues H78 and 119–121 (AHS) each bind thiamine diphosphate. D150 contacts Mg(2+). Residues 151–152 (GA), N179, Y286, and E368 contribute to the thiamine diphosphate site. N179 provides a ligand contact to Mg(2+).

The protein belongs to the transketolase family. DXPS subfamily. Homodimer. Mg(2+) serves as cofactor. The cofactor is thiamine diphosphate.

The catalysed reaction is D-glyceraldehyde 3-phosphate + pyruvate + H(+) = 1-deoxy-D-xylulose 5-phosphate + CO2. It functions in the pathway metabolic intermediate biosynthesis; 1-deoxy-D-xylulose 5-phosphate biosynthesis; 1-deoxy-D-xylulose 5-phosphate from D-glyceraldehyde 3-phosphate and pyruvate: step 1/1. In terms of biological role, catalyzes the acyloin condensation reaction between C atoms 2 and 3 of pyruvate and glyceraldehyde 3-phosphate to yield 1-deoxy-D-xylulose-5-phosphate (DXP). This is 1-deoxy-D-xylulose-5-phosphate synthase from Albidiferax ferrireducens (strain ATCC BAA-621 / DSM 15236 / T118) (Rhodoferax ferrireducens).